The chain runs to 433 residues: Glutamate-rich protein 2 (433 aa).

Disordered stretches follow at residues 56 to 86, 113 to 161, 189 to 273, 308 to 344, and 394 to 433; these read VPAAGTAPAPPPPRALRPAPGPPRSAPLAPP, DSAS…KHPQ, SRQN…SIET, CLEDIEENLSDSTDGDGEEDSNNEDDEGPAKKETRAP, and EKAQEEEEEEESDEDSSSESEVDSSEDGSEDSSDECEDGS. Positions 63 to 85 are enriched in pro residues; the sequence is PAPPPPRALRPAPGPPRSAPLAP. Residues 114–127 show a composition bias toward polar residues; sequence SASQARGSEPSSSA. 2 stretches are compositionally biased toward basic and acidic residues: residues 199–214 and 244–258; these read DPKEKLMSGSNKEKPQ and ARKETSSKKIEDKVS. Residues 259–273 show a composition bias toward polar residues; it reads LKSSENRPSSRSIET. Acidic residues-rich tracts occupy residues 308–334 and 397–433; these read CLEDIEENLSDSTDGDGEEDSNNEDDE and QEEEEEEESDEDSSSESEVDSSEDGSEDSSDECEDGS.

The polypeptide is Glutamate-rich protein 2 (Erich2) (Rattus norvegicus (Rat)).